A 557-amino-acid polypeptide reads, in one-letter code: Dihydroxy-acid dehydratase (557 aa).

D78 is a Mg(2+) binding site. [2Fe-2S] cluster is bound at residue C119. Residues D120 and K121 each coordinate Mg(2+). Position 121 is an N6-carboxylysine (K121). Position 191 (C191) interacts with [2Fe-2S] cluster. E442 is a Mg(2+) binding site. The active-site Proton acceptor is the S468.

The protein belongs to the IlvD/Edd family. In terms of assembly, homodimer. [2Fe-2S] cluster is required as a cofactor. Mg(2+) serves as cofactor.

It carries out the reaction (2R)-2,3-dihydroxy-3-methylbutanoate = 3-methyl-2-oxobutanoate + H2O. The enzyme catalyses (2R,3R)-2,3-dihydroxy-3-methylpentanoate = (S)-3-methyl-2-oxopentanoate + H2O. The protein operates within amino-acid biosynthesis; L-isoleucine biosynthesis; L-isoleucine from 2-oxobutanoate: step 3/4. It functions in the pathway amino-acid biosynthesis; L-valine biosynthesis; L-valine from pyruvate: step 3/4. Functionally, functions in the biosynthesis of branched-chain amino acids. Catalyzes the dehydration of (2R,3R)-2,3-dihydroxy-3-methylpentanoate (2,3-dihydroxy-3-methylvalerate) into 2-oxo-3-methylpentanoate (2-oxo-3-methylvalerate) and of (2R)-2,3-dihydroxy-3-methylbutanoate (2,3-dihydroxyisovalerate) into 2-oxo-3-methylbutanoate (2-oxoisovalerate), the penultimate precursor to L-isoleucine and L-valine, respectively. The sequence is that of Dihydroxy-acid dehydratase from Lachnoclostridium phytofermentans (strain ATCC 700394 / DSM 18823 / ISDg) (Clostridium phytofermentans).